Reading from the N-terminus, the 501-residue chain is HMG-box protein STE11 (501 aa).

Polar residues predominate over residues 142-153; it reads PVNMVGSLSGSP. Disordered regions lie at residues 142-205 and 246-293; these read PVNM…KRPL and YAEM…SLEQ. Residues 192 to 204 show a composition bias toward low complexity; it reads SRSGSSSSGIKRP. Positions 201–265 form a DNA-binding region, HMG box; the sequence is IKRPLNSFML…RHAKEYPDYK (65 aa). Basic and acidic residues predominate over residues 246-263; that stretch reads YAEMAQRERERHAKEYPD.

Phosphorylated by MAPK2.

It is found in the nucleus. In Pneumocystis carinii, this protein is HMG-box protein STE11.